Consider the following 124-residue polypeptide: MRHYEIVFIVHPDQSEQVPAMIERYKSTITSHGGQIHRIEDWGRRQLAYMIEKLAKAHYVCMNIECDQTTLDELEHAFKFNDAVLRHLIVKMKKAETGPSPMMKEVQREEAKKSAATQPSEAQA.

The disordered stretch occupies residues 96 to 124 (ETGPSPMMKEVQREEAKKSAATQPSEAQA). Polar residues predominate over residues 115-124 (AATQPSEAQA).

It belongs to the bacterial ribosomal protein bS6 family.

Functionally, binds together with bS18 to 16S ribosomal RNA. The chain is Small ribosomal subunit protein bS6 from Paraburkholderia phytofirmans (strain DSM 17436 / LMG 22146 / PsJN) (Burkholderia phytofirmans).